The chain runs to 319 residues: Acetyl-coenzyme A carboxylase carboxyl transferase subunit alpha (319 aa).

A CoA carboxyltransferase C-terminal domain is found at 35-296 (NIDEEVHRLR…KAQLLEDLAD (262 aa)).

It belongs to the AccA family. In terms of assembly, acetyl-CoA carboxylase is a heterohexamer composed of biotin carboxyl carrier protein (AccB), biotin carboxylase (AccC) and two subunits each of ACCase subunit alpha (AccA) and ACCase subunit beta (AccD).

The protein resides in the cytoplasm. The catalysed reaction is N(6)-carboxybiotinyl-L-lysyl-[protein] + acetyl-CoA = N(6)-biotinyl-L-lysyl-[protein] + malonyl-CoA. It participates in lipid metabolism; malonyl-CoA biosynthesis; malonyl-CoA from acetyl-CoA: step 1/1. In terms of biological role, component of the acetyl coenzyme A carboxylase (ACC) complex. First, biotin carboxylase catalyzes the carboxylation of biotin on its carrier protein (BCCP) and then the CO(2) group is transferred by the carboxyltransferase to acetyl-CoA to form malonyl-CoA. In Salmonella paratyphi C (strain RKS4594), this protein is Acetyl-coenzyme A carboxylase carboxyl transferase subunit alpha.